Reading from the N-terminus, the 329-residue chain is Serine/threonine-protein phosphatase PP1-alpha (329 aa).

The Mn(2+) site is built by D64, H66, D92, and N124. H125 functions as the Proton donor in the catalytic mechanism. Positions 173 and 248 each coordinate Mn(2+). A disordered region spans residues 309–329; it reads GMNSGRPAVGGGRPGTTAGKK.

This sequence belongs to the PPP phosphatase family. PP-1 subfamily. As to quaternary structure, interacts with lab-1; the interaction is direct. Interacts with knl-1; the interaction is direct. Mn(2+) serves as cofactor.

The catalysed reaction is O-phospho-L-seryl-[protein] + H2O = L-seryl-[protein] + phosphate. It carries out the reaction O-phospho-L-threonyl-[protein] + H2O = L-threonyl-[protein] + phosphate. Serine/threonine-protein phosphatase which antagonizes the function of air-2 in the regulation of chromosome cohesion. Dephosphorylates histone H3 at 'Ser-10'. Dephosphorylates translation initiation factor eIF2alpha. Involved in the activation of chloride channel clh-3 during cell swelling and meiotic maturation. The protein is Serine/threonine-protein phosphatase PP1-alpha (gsp-1) of Caenorhabditis briggsae.